Consider the following 429-residue polypeptide: UPF0242 protein CT_616 (429 aa).

Belongs to the UPF0242 family.

The polypeptide is UPF0242 protein CT_616 (Chlamydia trachomatis serovar D (strain ATCC VR-885 / DSM 19411 / UW-3/Cx)).